A 326-amino-acid chain; its full sequence is Protein FAM50 homolog (326 aa).

A disordered region spans residues 77 to 111 (ISNRDLQVARGDQSSSTQSKDSQEAREKEEHVAKH). The span at 97 to 109 (DSQEAREKEEHVA) shows a compositional bias: basic and acidic residues.

Belongs to the FAM50 family.

The protein is Protein FAM50 homolog of Caenorhabditis elegans.